The following is a 242-amino-acid chain: Probable transcriptional regulatory protein Bcep18194_A5621 (242 aa).

The protein belongs to the TACO1 family.

It is found in the cytoplasm. The polypeptide is Probable transcriptional regulatory protein Bcep18194_A5621 (Burkholderia lata (strain ATCC 17760 / DSM 23089 / LMG 22485 / NCIMB 9086 / R18194 / 383)).